We begin with the raw amino-acid sequence, 396 residues long: S-adenosylmethionine synthase (396 aa).

His-14 serves as a coordination point for ATP. Asp-16 is a Mg(2+) binding site. K(+) is bound at residue Glu-42. Residues Glu-55 and Gln-98 each contribute to the L-methionine site. A flexible loop region spans residues 98 to 108; sequence QSPDIAMGVDK. ATP contacts are provided by residues 174–176, 240–241, Asp-249, 255–256, Ala-272, and Lys-276; these read DGK, RF, and RK. Asp-249 lines the L-methionine pocket. Lys-280 lines the L-methionine pocket.

It belongs to the AdoMet synthase family. As to quaternary structure, homotetramer; dimer of dimers. Mg(2+) is required as a cofactor. It depends on K(+) as a cofactor.

It localises to the cytoplasm. It carries out the reaction L-methionine + ATP + H2O = S-adenosyl-L-methionine + phosphate + diphosphate. It participates in amino-acid biosynthesis; S-adenosyl-L-methionine biosynthesis; S-adenosyl-L-methionine from L-methionine: step 1/1. Its function is as follows. Catalyzes the formation of S-adenosylmethionine (AdoMet) from methionine and ATP. The overall synthetic reaction is composed of two sequential steps, AdoMet formation and the subsequent tripolyphosphate hydrolysis which occurs prior to release of AdoMet from the enzyme. This chain is S-adenosylmethionine synthase, found in Caldicellulosiruptor saccharolyticus (strain ATCC 43494 / DSM 8903 / Tp8T 6331).